The sequence spans 475 residues: Sulfate adenylyltransferase subunit 1 (475 aa).

The 216-residue stretch at 25–240 (KSLLRFLTCG…VLETVEVINL (216 aa)) folds into the tr-type G domain. The segment at 34 to 41 (GSVDDGKS) is G1. 34-41 (GSVDDGKS) serves as a coordination point for GTP. Positions 92-96 (GITID) are G2. The segment at 113–116 (DTPG) is G3. Residues 113–117 (DTPGH) and 168–171 (NKMD) contribute to the GTP site. The interval 168–171 (NKMD) is G4. Positions 206–208 (SAL) are G5.

The protein belongs to the TRAFAC class translation factor GTPase superfamily. Classic translation factor GTPase family. CysN/NodQ subfamily. Heterodimer composed of CysD, the smaller subunit, and CysN.

It carries out the reaction sulfate + ATP + H(+) = adenosine 5'-phosphosulfate + diphosphate. It participates in sulfur metabolism; hydrogen sulfide biosynthesis; sulfite from sulfate: step 1/3. Its function is as follows. With CysD forms the ATP sulfurylase (ATPS) that catalyzes the adenylation of sulfate producing adenosine 5'-phosphosulfate (APS) and diphosphate, the first enzymatic step in sulfur assimilation pathway. APS synthesis involves the formation of a high-energy phosphoric-sulfuric acid anhydride bond driven by GTP hydrolysis by CysN coupled to ATP hydrolysis by CysD. This chain is Sulfate adenylyltransferase subunit 1, found in Sodalis glossinidius (strain morsitans).